A 47-amino-acid polypeptide reads, in one-letter code: Fasciclin-like arabinogalactan protein (47 aa).

The FAS1 domain occupies 1–47 (APTPATLNGLTIFAPNDEAFKATGVPDLSKLSNAPMVSLLQYHAAAR).

Belongs to the fasciclin-like AGP family.

Its function is as follows. May be a cell surface adhesion protein. The chain is Fasciclin-like arabinogalactan protein from Jatropha curcas (Barbados nut).